Here is a 218-residue protein sequence, read N- to C-terminus: MSSDDEGREEYLFKIVVIGDSAVGKSNLLSRYARNEFSANSKATIGVEFQTQSMEIEGKEVKAQIWDTAGQERFRAVTSAYYRGAVGALVVYDITRRTTFESVGRWLDELKIHSDTTVARMLVGNKCDLENIRAVSVEEGKALAEEEGLFFVETSALDSTNVKTAFEMVILDIYNNVSRKQLNSDTYKDELTVNRVSLVKDDNSASKQSSGFSCCSST.

19–26 (GDSAVGKS) contacts GTP. Residues 41–49 (SKATIGVEF) carry the Effector region motif. GTP-binding positions include 67-71 (DTAGQ), 125-128 (NKCD), and 155-156 (SA). S-geranylgeranyl cysteine attachment occurs at residues Cys214 and Cys215. Residue Cys215 is modified to Cysteine methyl ester. A propeptide spans 216–218 (SST) (removed in mature form).

This sequence belongs to the small GTPase superfamily. Rab family.

It localises to the cell membrane. Intracellular vesicle trafficking and protein transport. The chain is Ras-related protein RABA5e (RABA5E) from Arabidopsis thaliana (Mouse-ear cress).